The sequence spans 152 residues: Transcriptional regulator MraZ (152 aa).

2 consecutive SpoVT-AbrB domains span residues 5 to 52 and 81 to 124; these read ASAI…PIHE and AHEV…DEQA.

Belongs to the MraZ family. Forms oligomers.

The protein localises to the cytoplasm. It is found in the nucleoid. This is Transcriptional regulator MraZ from Shewanella putrefaciens (strain CN-32 / ATCC BAA-453).